Reading from the N-terminus, the 223-residue chain is Large ribosomal subunit protein uL4c (223 aa).

Residues 61–96 (TKTRSEVEGGGKKPWKQKGTGNARAGSSNSPLWKGG) are disordered.

This sequence belongs to the universal ribosomal protein uL4 family. As to quaternary structure, part of the 50S ribosomal subunit.

It is found in the plastid. Its subcellular location is the chloroplast. Functionally, probably binds the 23S rRNA. The chain is Large ribosomal subunit protein uL4c (rpl4) from Guillardia theta (Cryptophyte).